Consider the following 268-residue polypeptide: Tryptophan synthase alpha chain (268 aa).

Residues Glu49 and Asp60 each act as proton acceptor in the active site.

Belongs to the TrpA family. In terms of assembly, tetramer of two alpha and two beta chains.

It carries out the reaction (1S,2R)-1-C-(indol-3-yl)glycerol 3-phosphate + L-serine = D-glyceraldehyde 3-phosphate + L-tryptophan + H2O. It participates in amino-acid biosynthesis; L-tryptophan biosynthesis; L-tryptophan from chorismate: step 5/5. Its function is as follows. The alpha subunit is responsible for the aldol cleavage of indoleglycerol phosphate to indole and glyceraldehyde 3-phosphate. This Shigella sonnei (strain Ss046) protein is Tryptophan synthase alpha chain.